Here is a 346-residue protein sequence, read N- to C-terminus: Methylthioribose-1-phosphate isomerase (346 aa).

Residues 46-48, Arg89, and Gln196 each bind substrate; that span reads RGA. The active-site Proton donor is the Asp237. Residue 247-248 participates in substrate binding; it reads NK.

It belongs to the eIF-2B alpha/beta/delta subunits family. MtnA subfamily.

It catalyses the reaction 5-(methylsulfanyl)-alpha-D-ribose 1-phosphate = 5-(methylsulfanyl)-D-ribulose 1-phosphate. It participates in amino-acid biosynthesis; L-methionine biosynthesis via salvage pathway; L-methionine from S-methyl-5-thio-alpha-D-ribose 1-phosphate: step 1/6. Catalyzes the interconversion of methylthioribose-1-phosphate (MTR-1-P) into methylthioribulose-1-phosphate (MTRu-1-P). This is Methylthioribose-1-phosphate isomerase from Geobacter sulfurreducens (strain ATCC 51573 / DSM 12127 / PCA).